The sequence spans 176 residues: Inorganic pyrophosphatase (176 aa).

The substrate site is built by Lys-30, Arg-44, and Tyr-56. 3 residues coordinate Mg(2+): Asp-66, Asp-71, and Asp-103. Tyr-142 provides a ligand contact to substrate.

The protein belongs to the PPase family. In terms of assembly, homohexamer. Mg(2+) serves as cofactor.

Its subcellular location is the cytoplasm. The enzyme catalyses diphosphate + H2O = 2 phosphate + H(+). Catalyzes the hydrolysis of inorganic pyrophosphate (PPi) forming two phosphate ions. The sequence is that of Inorganic pyrophosphatase from Escherichia coli O6:H1 (strain CFT073 / ATCC 700928 / UPEC).